The primary structure comprises 317 residues: Probable cell division protein WhiA (317 aa).

A DNA-binding region (H-T-H motif) is located at residues 267–300; sequence SLKELGEMLHPPVGKSGVNHRLRRLELIARQVRG.

This sequence belongs to the WhiA family.

Its function is as follows. Involved in cell division and chromosome segregation. The polypeptide is Probable cell division protein WhiA (Moorella thermoacetica (strain ATCC 39073 / JCM 9320)).